The primary structure comprises 999 residues: Sarcoplasmic/endoplasmic reticulum calcium ATPase 3 (999 aa).

Over 1-48 (MEAAHSVPVQDVLSRFGVAESCGLSPEQVRRNREKYGPNELPAEERKS) the chain is Cytoplasmic. A helical transmembrane segment spans residues 49 to 69 (LWELVLEQFEDLLVRILLMAA). Topologically, residues 70-89 (FLSFILAWFEEGEESTTAFV) are lumenal. Residues 90–110 (EPIVIIMILIANAVVGVWQER) traverse the membrane as a helical segment. The Cytoplasmic portion of the chain corresponds to 111–253 (NAESAIEALK…PEKTPLQQKL (143 aa)). The chain crosses the membrane as a helical span at residues 254–273 (DEFSQQLSKVIFLVCIAVWV). Topologically, residues 274 to 295 (INISHFSDPVHGGSWFRGAIYY) are lumenal. The chain crosses the membrane as a helical span at residues 296 to 313 (FKTSVALAVAAIPEGLPA). Val-304, Ala-305, Ile-307, and Glu-309 together coordinate Ca(2+). At 314 to 757 (VITTCLALGT…EEGRAIYNNM (444 aa)) the chain is on the cytoplasmic side. Residue Asp-351 is the 4-aspartylphosphate intermediate of the active site. Positions 351 and 353 each coordinate Mg(2+). Thr-353 serves as a coordination point for ATP. The interval 370–400 (EKVEGTQCSLHEFSITGSTYAPEGQILKDEK) is interaction with phospholamban 1. ATP is bound by residues Glu-442, Arg-489, Lys-515, Arg-560, Thr-625, Gly-626, Asp-627, Arg-678, and Lys-684. Asp-703 contributes to the Mg(2+) binding site. Asn-706 is an ATP binding site. The helical transmembrane segment at 758-777 (KQFIRYLISSNVGEVVCIFL) threads the bilayer. The Ca(2+) site is built by Asn-768 and Glu-771. Topologically, residues 778-787 (TAILGLPEAL) are lumenal. Residues 788–808 (IPVQLLWVNLVTDGLPATALG) form a helical membrane-spanning segment. The segment at 788–808 (IPVQLLWVNLVTDGLPATALG) is interaction with phospholamban 2. 3 residues coordinate Ca(2+): Asn-796, Thr-799, and Asp-800. Topologically, residues 809 to 828 (FNPPDLDIMDKLPRNPKEPL) are cytoplasmic. Residues 829–851 (ISGWLFFRYLAIGVYVGLATVGA) form a helical membrane-spanning segment. The Lumenal portion of the chain corresponds to 852 to 897 (ATWWFLYDAEGPQVSFHQLRNFMRCTEDNPIFEGVNCEIFESRYPT). The chain crosses the membrane as a helical span at residues 898–917 (TMALSVLVTIEMCNALNSVS). Position 908 (Glu-908) interacts with Ca(2+). The Cytoplasmic segment spans residues 918–930 (ENQSLLRMPPWLN). A helical membrane pass occupies residues 931-949 (IWLLGAIVMSMALHFFILY). At 950 to 964 (VKPMPLIFQVTPLSW) the chain is on the lumenal side. Residues 965 to 985 (PQWVVVLKISLPVILLDEGLK) form a helical membrane-spanning segment. Residues 986–999 (YLSRNHLEGEEDKK) are Cytoplasmic-facing.

It belongs to the cation transport ATPase (P-type) (TC 3.A.3) family. Type IIA subfamily. Interacts with sarcolipin (SLN). Interacts with phospholamban (PLN). Interacts with myoregulin (MRLN). Interacts with DWORF. Mg(2+) serves as cofactor. In terms of tissue distribution, found in spleen, lung, intestine and brain.

It is found in the endoplasmic reticulum membrane. Its subcellular location is the sarcoplasmic reticulum membrane. It catalyses the reaction Ca(2+)(in) + ATP + H2O = Ca(2+)(out) + ADP + phosphate + H(+). Its activity is regulated as follows. Inhibited by sarcolipin (SLN), phospholamban (PLN) and myoregulin (MRLN). Enhanced by DWORF; DWORF increases activity by displacing sarcolipin (SLN), phospholamban (PLN) and myoregulin (MRLN). In terms of biological role, this magnesium-dependent enzyme catalyzes the hydrolysis of ATP coupled with the transport of calcium. Transports calcium ions from the cytosol into the sarcoplasmic/endoplasmic reticulum lumen. Contributes to calcium sequestration involved in muscular excitation/contraction. The chain is Sarcoplasmic/endoplasmic reticulum calcium ATPase 3 (ATP2A3) from Gallus gallus (Chicken).